Consider the following 422-residue polypeptide: uncharacterized protein (422 aa).

Belongs to the N(4)/N(6)-methyltransferase family.

It carries out the reaction a 2'-deoxyadenosine in DNA + S-adenosyl-L-methionine = an N(6)-methyl-2'-deoxyadenosine in DNA + S-adenosyl-L-homocysteine + H(+). This is an uncharacterized protein from Mycoplasma pneumoniae (strain ATCC 29342 / M129 / Subtype 1) (Mycoplasmoides pneumoniae).